A 702-amino-acid chain; its full sequence is p-hydroxybenzoic acid--AMP ligase FadD22 (702 aa).

The 79-residue stretch at 538 to 616 (ERHRLVLDAV…GLAQYLEAEL (79 aa)) folds into the Carrier domain. Ser-576 carries the post-translational modification O-(pantetheine 4'-phosphoryl)serine.

This sequence belongs to the ATP-dependent AMP-binding enzyme family.

The enzyme catalyses holo-[4-hydroxyphenylalkanoate synthase] + 4-hydroxybenzoate + ATP = 4-hydroxyphenyl-[4-hydroxyphenylalkanoate synthase] + AMP + diphosphate. Its pathway is lipid metabolism; fatty acid biosynthesis. Functionally, catalyzes the adenylation of p-hydroxybenzoic acid (pHBA) to form p-hydroxybenzoic acid-AMP (pHBA-AMP), which is converted directly to p-hydroxybenzoyl-S-FadD22 (pHBA-S-FAdD22) thioester intermediate in a CoA-independent manner by attack of the phosphopantetheine thiol of FadD22. This intermediate primes the biosynthesis of the phenolphthiocerol (PPOL) by presenting the pHBA starter unit for elongation by Pks15/1. PPOL is an important intermediate in the biosynthesis of phenolic glycolipid (mycosid B). In Mycobacterium marinum (strain ATCC BAA-535 / M), this protein is p-hydroxybenzoic acid--AMP ligase FadD22 (fadD22).